The sequence spans 461 residues: Ornithine decarboxylase (461 aa).

At Lys-69 the chain carries N6-(pyridoxal phosphate)lysine. Pyridoxal 5'-phosphate is bound by residues Ser-200, Gly-237, and 274–277 (EPGR). At Ser-303 the chain carries Phosphoserine; by CK2. 331–332 (YD) lines the substrate pocket. The Proton donor; shared with dimeric partner role is filled by Cys-360. Position 360 is an S-nitrosocysteine (Cys-360). A substrate-binding site is contributed by Asp-361. Residue Tyr-389 coordinates pyridoxal 5'-phosphate.

The protein belongs to the Orn/Lys/Arg decarboxylase class-II family. Homodimer. Only the dimer is catalytically active, as the active sites are constructed of residues from both monomers. Requires pyridoxal 5'-phosphate as cofactor.

The enzyme catalyses L-ornithine + H(+) = putrescine + CO2. Its pathway is amine and polyamine biosynthesis; putrescine biosynthesis via L-ornithine pathway; putrescine from L-ornithine: step 1/1. With respect to regulation, inhibited by antizymes (AZs) OAZ1, OAZ2 and OAZ3 in response to polyamine levels. AZs inhibit the assembly of the functional homodimer by binding to ODC monomers. Additionally, OAZ1 targets ODC monomers for ubiquitin-independent proteolytic destruction by the 26S proteasome. In terms of biological role, catalyzes the first and rate-limiting step of polyamine biosynthesis that converts ornithine into putrescine, which is the precursor for the polyamines, spermidine and spermine. Polyamines are essential for cell proliferation and are implicated in cellular processes, ranging from DNA replication to apoptosis. This Bos taurus (Bovine) protein is Ornithine decarboxylase (ODC1).